A 269-amino-acid chain; its full sequence is Phosphate import ATP-binding protein PstB (269 aa).

The ABC transporter domain occupies 23–264 (IATRNLEFYY…PSKQQTEDYI (242 aa)). Position 55-62 (55-62 (GPSGCGKS)) interacts with ATP.

This sequence belongs to the ABC transporter superfamily. Phosphate importer (TC 3.A.1.7) family. In terms of assembly, the complex is composed of two ATP-binding proteins (PstB), two transmembrane proteins (PstC and PstA) and a solute-binding protein (PstS).

The protein resides in the cell inner membrane. The enzyme catalyses phosphate(out) + ATP + H2O = ADP + 2 phosphate(in) + H(+). Part of the ABC transporter complex PstSACB involved in phosphate import. Responsible for energy coupling to the transport system. This chain is Phosphate import ATP-binding protein PstB, found in Xylella fastidiosa (strain Temecula1 / ATCC 700964).